The following is a 99-amino-acid chain: Protein translation factor SUI1 homolog (99 aa).

The protein belongs to the SUI1 family.

This chain is Protein translation factor SUI1 homolog, found in Picrophilus torridus (strain ATCC 700027 / DSM 9790 / JCM 10055 / NBRC 100828 / KAW 2/3).